The primary structure comprises 329 residues: Endo-beta-N-acetylglucosaminidase F3 (329 aa).

Residues Met1–Ser39 constitute a signal peptide (or 40, or 41). The 282-residue stretch at Gly48 to Asn329 folds into the GH18 domain. An O-linked (Man...) threonine glycan is attached at Thr88. Glu167 acts as the Proton donor in catalysis.

The protein belongs to the glycosyl hydrolase 18 family. Monomer. Post-translationally, carbohydrate at Thr-88 consists of (2-OMe)Man1-4GlcNAcU1-4GlcU1-4Glc1-4(2-OMe)GlcU1-4[(2-OMe)Rham1-2]Man.

Its subcellular location is the secreted. It catalyses the reaction an N(4)-(oligosaccharide-(1-&gt;3)-[oligosaccharide-(1-&gt;6)]-beta-D-Man-(1-&gt;4)-beta-D-GlcNAc-(1-&gt;4)-alpha-D-GlcNAc)-L-asparaginyl-[protein] + H2O = an oligosaccharide-(1-&gt;3)-[oligosaccharide-(1-&gt;6)]-beta-D-Man-(1-&gt;4)-D-GlcNAc + N(4)-(N-acetyl-beta-D-glucosaminyl)-L-asparaginyl-[protein]. Its function is as follows. Endohydrolysis of the di-N-acetylchitobiosyl unit in high-mannose glycopeptides and glycoproteins. Hydrolyzes bi- and triantennary glycans. The presence of a core-bound fucose greatly augments endo F3 activity on biantennary and, presumably, triantennary oligosaccharides. This chain is Endo-beta-N-acetylglucosaminidase F3 (endOF3), found in Elizabethkingia meningoseptica (Chryseobacterium meningosepticum).